The sequence spans 265 residues: Hydroxyethylthiazole kinase (265 aa).

Met43 provides a ligand contact to substrate. ATP-binding residues include Arg119 and Ser165. Ala192 lines the substrate pocket.

This sequence belongs to the Thz kinase family. Mg(2+) is required as a cofactor.

It carries out the reaction 5-(2-hydroxyethyl)-4-methylthiazole + ATP = 4-methyl-5-(2-phosphooxyethyl)-thiazole + ADP + H(+). It functions in the pathway cofactor biosynthesis; thiamine diphosphate biosynthesis; 4-methyl-5-(2-phosphoethyl)-thiazole from 5-(2-hydroxyethyl)-4-methylthiazole: step 1/1. In terms of biological role, catalyzes the phosphorylation of the hydroxyl group of 4-methyl-5-beta-hydroxyethylthiazole (THZ). This is Hydroxyethylthiazole kinase from Haemophilus influenzae (strain ATCC 51907 / DSM 11121 / KW20 / Rd).